Here is a 350-residue protein sequence, read N- to C-terminus: MDSFNYTTPDYGHYDDKDTLDLNTPVDKTSNTLRVPDILALVIFAVVFLVGVLGNALVVWVTAFEAKRTINAIWFLNLAVADFLSCLALPILFTSIVQHHHWPFGGAACSILPSLILLNMYASILLLATISADRFLLVFKPIWCQNFRGAGLAWIACAVAWGLALLLTIPSFLYRVVREEYFPPKVLCGVDYSHDKRRERAVAIVRLVLGFLWPLLTLTICYTFILLRTWSRRATRSTKTLKVVVAVVASFFIFWLPYQVTGIMMSFLEPSSPTFLLLKKLDSLCVSFAYINCCINPIIYVVAGQGFQGRLRKSLPSLLRNVLTEESVVRESKSFTRSTVDTMAQKTQAV.

At 1–37 (MDSFNYTTPDYGHYDDKDTLDLNTPVDKTSNTLRVPD) the chain is on the extracellular side. An N-linked (GlcNAc...) asparagine glycan is attached at asparagine 5. Residues 10-18 (DYGHYDDKD) form a required for CHIPS binding region. Residues tyrosine 11 and tyrosine 14 each carry the sulfotyrosine modification. The involved in C5a binding stretch occupies residues 21–30 (DLNTPVDKTS). A helical membrane pass occupies residues 38 to 64 (ILALVIFAVVFLVGVLGNALVVWVTAF). Over 65–69 (EAKRT) the chain is Cytoplasmic. Residues 70–93 (INAIWFLNLAVADFLSCLALPILF) traverse the membrane as a helical segment. Topologically, residues 94-110 (TSIVQHHHWPFGGAACS) are extracellular. A disulfide bond links cysteine 109 and cysteine 188. The chain crosses the membrane as a helical span at residues 111–132 (ILPSLILLNMYASILLLATISA). Residues 133–153 (DRFLLVFKPIWCQNFRGAGLA) lie on the Cytoplasmic side of the membrane. Residues 154 to 174 (WIACAVAWGLALLLTIPSFLY) form a helical membrane-spanning segment. At 175–200 (RVVREEYFPPKVLCGVDYSHDKRRER) the chain is on the extracellular side. Residues 201–226 (AVAIVRLVLGFLWPLLTLTICYTFIL) form a helical membrane-spanning segment. At 227–242 (LRTWSRRATRSTKTLK) the chain is on the cytoplasmic side. A helical transmembrane segment spans residues 243 to 265 (VVVAVVASFFIFWLPYQVTGIMM). The Extracellular portion of the chain corresponds to 266–282 (SFLEPSSPTFLLLKKLD). A helical membrane pass occupies residues 283–303 (SLCVSFAYINCCINPIIYVVA). The Cytoplasmic portion of the chain corresponds to 304 to 350 (GQGFQGRLRKSLPSLLRNVLTEESVVRESKSFTRSTVDTMAQKTQAV). Phosphoserine is present on residues serine 314, serine 317, serine 327, serine 332, serine 334, and serine 338.

It belongs to the G-protein coupled receptor 1 family. As to quaternary structure, homodimer. May also form higher-order oligomers. Interacts (when phosphorylated) with ARRB1 and ARRB2; the interaction is associated with internalization of C5aR. Interacts (via N-terminal domain) with S.aureus chemotaxis inhibitory protein (CHIPS); the interaction blocks the receptor and may thus inhibit the immune response. Post-translationally, sulfation plays a critical role in the association of C5aR with C5a, but no significant role in the ability of the receptor to transduce a signal and mobilize calcium in response to a small a small peptide agonist. Sulfation at Tyr-14 is important for CHIPS binding. In terms of processing, phosphorylated on serine residues in response to C5a binding, resulting in internalization of the receptor and short-term desensitization to the ligand. The key residues involved in this process are Ser-334 and Ser-338.

The protein resides in the cell membrane. The protein localises to the cytoplasmic vesicle. In terms of biological role, receptor for the chemotactic and inflammatory peptide anaphylatoxin C5a. The ligand interacts with at least two sites on the receptor: a high-affinity site on the extracellular N-terminus, and a second site in the transmembrane region which activates downstream signaling events. Receptor activation stimulates chemotaxis, granule enzyme release, intracellular calcium release and superoxide anion production. The chain is C5a anaphylatoxin chemotactic receptor 1 (C5AR1) from Homo sapiens (Human).